Reading from the N-terminus, the 1327-residue chain is ABC transporter 1 (1327 aa).

6 helical membrane passes run 47-67 (LGILAAIASGVPFPLMGIIFG), 100-120 (VYVGIAYFVLVYIYIASWNLF), 170-190 (KVGIVLNSVSFFITAYIIAFV), 195-215 (LGGELVSLTPAYLLMSLVGGY), 228-248 (VAGASSVAMEALSNATIVHAF), and 276-296 (VAVQSGLLYFIAFSANGLAFW). The 280-residue stretch at 47-326 (LGILAAIASG…TTYTVIFLLV (280 aa)) folds into the ABC transmembrane type-1 1 domain. N-linked (GlcNAc...) asparagine glycosylation is found at asparagine 381, asparagine 390, and asparagine 406. An ABC transporter 1 domain is found at 386–663 (IELNNVSFAF…DGAYAGLVRL (278 aa)). 421 to 428 (GLSGSGKS) is an ATP binding site. N-linked (GlcNAc...) asparagine glycans are attached at residues asparagine 463 and asparagine 674. The next 6 helical transmembrane spans lie at 743–763 (FLALTSAFVVGGTYSASAVVF), 785–805 (FYGLMFFILAIIEFFANLGSW), 859–881 (LTGSVVGTIIAILVNLVVAIALS), 888–910 (IALVCLAVVPLMLGAGVMRVITM), 971–991 (LWLAISYGVSNFLYALAYWWG), and 1005–1025 (FFIVLMALLVSAQLWGQMFTL). Residues 743 to 1031 (FLALTSAFVV…MFTLAPDVSR (289 aa)) enclose the ABC transmembrane type-1 2 domain. A glycan (N-linked (GlcNAc...) asparagine) is linked at asparagine 1050. Positions 1054 to 1081 (PCQHLKPGNDLEANAEPREKRPDQSQGG) are disordered. The region spanning 1084–1323 (VSLNNVKFSY…SESYKINALH (240 aa)) is the ABC transporter 2 domain. 1119–1126 (GPSGAGKS) serves as a coordination point for ATP.

This sequence belongs to the ABC transporter superfamily. ABCB family. Multidrug resistance exporter (TC 3.A.1.201) subfamily.

The protein resides in the membrane. Functionally, ABC transporter; part of the gene cluster that mediates the biosynthesis of hydroxamate-containing siderophores that play a critical role in virulence via intracellular iron acquisition during macrophage infection. Probably involved in the excretion of the extracellular siderophores. This is ABC transporter 1 from Ajellomyces capsulatus (Darling's disease fungus).